Consider the following 293-residue polypeptide: Pyridoxal 5'-phosphate synthase subunit PdxS (293 aa).

Aspartate 25 is a D-ribose 5-phosphate binding site. Catalysis depends on lysine 82, which acts as the Schiff-base intermediate with D-ribose 5-phosphate. A D-ribose 5-phosphate-binding site is contributed by glycine 154. Arginine 166 serves as a coordination point for D-glyceraldehyde 3-phosphate. D-ribose 5-phosphate is bound by residues glycine 215 and 236–237 (GS).

The protein belongs to the PdxS/SNZ family. In terms of assembly, in the presence of PdxT, forms a dodecamer of heterodimers.

It catalyses the reaction aldehydo-D-ribose 5-phosphate + D-glyceraldehyde 3-phosphate + L-glutamine = pyridoxal 5'-phosphate + L-glutamate + phosphate + 3 H2O + H(+). It participates in cofactor biosynthesis; pyridoxal 5'-phosphate biosynthesis. Catalyzes the formation of pyridoxal 5'-phosphate from ribose 5-phosphate (RBP), glyceraldehyde 3-phosphate (G3P) and ammonia. The ammonia is provided by the PdxT subunit. Can also use ribulose 5-phosphate and dihydroxyacetone phosphate as substrates, resulting from enzyme-catalyzed isomerization of RBP and G3P, respectively. This is Pyridoxal 5'-phosphate synthase subunit PdxS from Thermotoga petrophila (strain ATCC BAA-488 / DSM 13995 / JCM 10881 / RKU-1).